The following is a 399-amino-acid chain: Alpha-tubulin N-acetyltransferase (399 aa).

In terms of domain architecture, N-acetyltransferase spans 1–178 (MEFNFIINKL…NNFVVFDQYF (178 aa)). Residues 112–125 (FYVHESCQRQGYGK) and 148–157 (SPKLIAFLKK) each bind acetyl-CoA. The span at 183-193 (SSQNKQNQNTR) shows a compositional bias: polar residues. A disordered region spans residues 183-223 (SSQNKQNQNTRSYSQPYSDYSSQIPTNYPQQQQQQSNSKSY). Positions 194–223 (SYSQPYSDYSSQIPTNYPQQQQQQSNSKSY) are enriched in low complexity.

Belongs to the acetyltransferase ATAT1 family.

The enzyme catalyses L-lysyl-[alpha-tubulin] + acetyl-CoA = N(6)-acetyl-L-lysyl-[alpha-tubulin] + CoA + H(+). Its function is as follows. Specifically acetylates 'Lys-40' in alpha-tubulin on the lumenal side of microtubules. Promotes microtubule destabilization and accelerates microtubule dynamics; this activity may be independent of acetylation activity. Acetylates alpha-tubulin with a slow enzymatic rate, due to a catalytic site that is not optimized for acetyl transfer. Enters the microtubule through each end and diffuses quickly throughout the lumen of microtubules. Acetylates only long/old microtubules because of its slow acetylation rate since it does not have time to act on dynamically unstable microtubules before the enzyme is released. This chain is Alpha-tubulin N-acetyltransferase, found in Tetrahymena thermophila (strain SB210).